The chain runs to 632 residues: RNA-binding post-transcriptional regulator csx1 (632 aa).

Phosphoserine; by MAPK sty1 occurs at positions 42 and 54. Phosphoserine occurs at positions 67 and 69. 2 consecutive RRM domains span residues 85 to 167 (DTLW…WATG) and 182 to 261 (FSIF…VASP). Position 291 is a phosphoserine; by MAPK sty1 (Ser291). The RRM 3 domain occupies 297-369 (TTVFVGGLAS…SHIRLAWGHN (73 aa)). Ser455 carries the phosphoserine; by MAPK sty1 modification. Residues 456–476 (PPPLSRSASISPTLSGSGSGL) are disordered. Positions 466 to 476 (SPTLSGSGSGL) are enriched in low complexity.

Interacts with cip1 and cip2.

The protein resides in the cytoplasm. Functionally, regulates global gene expression after oxidative stress. Interacts and stabilizes atf1 and pcr1 mRNAs after oxidative stress, thus controlling their turnover. The protein is RNA-binding post-transcriptional regulator csx1 (csx1) of Schizosaccharomyces pombe (strain 972 / ATCC 24843) (Fission yeast).